Here is a 451-residue protein sequence, read N- to C-terminus: Tol-Pal system protein TolB 1 (451 aa).

The first 19 residues, 1 to 19 (MTLRMLFAFALLAAAPAQA), serve as a signal peptide directing secretion. Residues 18-29 (QAQQTEPQPAEE) are compositionally biased toward low complexity. Disordered regions lie at residues 18–37 (QAQQ…GTVS) and 431–451 (NERR…PLLP).

This sequence belongs to the TolB family. In terms of assembly, the Tol-Pal system is composed of five core proteins: the inner membrane proteins TolA, TolQ and TolR, the periplasmic protein TolB and the outer membrane protein Pal. They form a network linking the inner and outer membranes and the peptidoglycan layer.

It is found in the periplasm. Functionally, part of the Tol-Pal system, which plays a role in outer membrane invagination during cell division and is important for maintaining outer membrane integrity. This chain is Tol-Pal system protein TolB 1, found in Novosphingobium aromaticivorans (strain ATCC 700278 / DSM 12444 / CCUG 56034 / CIP 105152 / NBRC 16084 / F199).